We begin with the raw amino-acid sequence, 680 residues long: DNA-directed RNA polymerase subunit beta' (680 aa).

Zn(2+) is bound by residues cysteine 69, cysteine 71, cysteine 87, and cysteine 90. Positions 489, 491, and 493 each coordinate Mg(2+).

The protein belongs to the RNA polymerase beta' chain family. RpoC1 subfamily. In plastids the minimal PEP RNA polymerase catalytic core is composed of four subunits: alpha, beta, beta', and beta''. When a (nuclear-encoded) sigma factor is associated with the core the holoenzyme is formed, which can initiate transcription. Mg(2+) is required as a cofactor. Zn(2+) serves as cofactor.

The protein localises to the plastid. The protein resides in the chloroplast. It carries out the reaction RNA(n) + a ribonucleoside 5'-triphosphate = RNA(n+1) + diphosphate. Its function is as follows. DNA-dependent RNA polymerase catalyzes the transcription of DNA into RNA using the four ribonucleoside triphosphates as substrates. The chain is DNA-directed RNA polymerase subunit beta' from Carica papaya (Papaya).